The sequence spans 132 residues: Ribosome-binding factor A (132 aa).

The protein belongs to the RbfA family. Monomer. Binds 30S ribosomal subunits, but not 50S ribosomal subunits or 70S ribosomes.

It localises to the cytoplasm. In terms of biological role, one of several proteins that assist in the late maturation steps of the functional core of the 30S ribosomal subunit. Associates with free 30S ribosomal subunits (but not with 30S subunits that are part of 70S ribosomes or polysomes). Required for efficient processing of 16S rRNA. May interact with the 5'-terminal helix region of 16S rRNA. The sequence is that of Ribosome-binding factor A from Caldicellulosiruptor bescii (strain ATCC BAA-1888 / DSM 6725 / KCTC 15123 / Z-1320) (Anaerocellum thermophilum).